Here is a 139-residue protein sequence, read N- to C-terminus: Drosulfakinins (139 aa).

An N-terminal signal peptide occupies residues 1–35; it reads MGHRGMGCAHFATMAMPLWALTFYLLVVLPVPSQT. A propeptide spanning residues 36–71 is cleaved from the precursor; it reads ASVEVGKEERRLQDLDPKMGSEAGNTDGLSLARFGS. The residue at position 80 (phenylalanine 80) is a Phenylalanine amide. A propeptide spanning residues 81–109 is cleaved from the precursor; it reads GHRVPIISRPVIPIELDLLMDNEDDRTMS. At tyrosine 115 the chain carries Sulfotyrosine. Residue phenylalanine 120 is modified to Phenylalanine amide. The residue at position 132 (tyrosine 132) is a Sulfotyrosine. Phenylalanine 137 is subject to Phenylalanine amide.

It belongs to the gastrin/cholecystokinin family.

The protein localises to the secreted. In terms of biological role, drosulfakinin-0 (DSK 0) plays diverse biological roles including regulating gut muscle contraction in adults but not in larvae. This Drosophila pseudoobscura pseudoobscura (Fruit fly) protein is Drosulfakinins.